The sequence spans 265 residues: Phosphatidylserine decarboxylase proenzyme (265 aa).

The active-site Schiff-base intermediate with substrate; via pyruvic acid is serine 183. At serine 183 the chain carries Pyruvic acid (Ser); by autocatalysis. The interval proline 218–serine 242 is disordered.

Belongs to the phosphatidylserine decarboxylase family. PSD-A subfamily. In terms of assembly, heterodimer of a large membrane-associated beta subunit and a small pyruvoyl-containing alpha subunit. Pyruvate serves as cofactor. Post-translationally, is synthesized initially as an inactive proenzyme. Formation of the active enzyme involves a self-maturation process in which the active site pyruvoyl group is generated from an internal serine residue via an autocatalytic post-translational modification. Two non-identical subunits are generated from the proenzyme in this reaction, and the pyruvate is formed at the N-terminus of the alpha chain, which is derived from the carboxyl end of the proenzyme. The post-translation cleavage follows an unusual pathway, termed non-hydrolytic serinolysis, in which the side chain hydroxyl group of the serine supplies its oxygen atom to form the C-terminus of the beta chain, while the remainder of the serine residue undergoes an oxidative deamination to produce ammonia and the pyruvoyl prosthetic group on the alpha chain.

The protein localises to the cell membrane. The catalysed reaction is a 1,2-diacyl-sn-glycero-3-phospho-L-serine + H(+) = a 1,2-diacyl-sn-glycero-3-phosphoethanolamine + CO2. Its pathway is phospholipid metabolism; phosphatidylethanolamine biosynthesis; phosphatidylethanolamine from CDP-diacylglycerol: step 2/2. Its function is as follows. Catalyzes the formation of phosphatidylethanolamine (PtdEtn) from phosphatidylserine (PtdSer). The protein is Phosphatidylserine decarboxylase proenzyme of Neisseria meningitidis serogroup C (strain 053442).